The following is a 222-amino-acid chain: (4-{4-[2-(gamma-L-glutamylamino)ethyl]phenoxymethyl}furan-2-yl)methanamine synthase (222 aa).

This sequence belongs to the MfnF family.

It carries out the reaction gamma-L-glutamyltyramine + [5-(aminomethyl)furan-3-yl]methyl diphosphate = (4-{4-[2-(gamma-L-glutamylamino)ethyl]phenoxymethyl}furan-2-yl)methanamine + diphosphate. The protein operates within cofactor biosynthesis; methanofuran biosynthesis. Catalyzes the condensation between 5-(aminomethyl)-3-furanmethanol diphosphate (F1-PP) and gamma-glutamyltyramine to produce APMF-Glu. The chain is (4-{4-[2-(gamma-L-glutamylamino)ethyl]phenoxymethyl}furan-2-yl)methanamine synthase from Methanococcus vannielii.